The primary structure comprises 414 residues: Glutathione gamma-glutamylcysteinyltransferase (414 aa).

The Peptidase C83 domain maps to 37-256 (QLKKSFYKRQ…GYVLLEPMHI (220 aa)).

The protein belongs to the phytochelatin synthase family.

It carries out the reaction [Glu(-Cys)](n)-Gly + glutathione + H(+) = [Glu(-Cys)](n+1)-Gly + glycine. Required for detoxification of heavy metals such as cadmium and arsenate. The protein is Glutathione gamma-glutamylcysteinyltransferase of Schizosaccharomyces pombe (strain 972 / ATCC 24843) (Fission yeast).